The following is a 461-amino-acid chain: Cysteine--tRNA ligase (461 aa).

Residue C29 participates in Zn(2+) binding. The 'HIGH' region motif lies at 31-41; that stretch reads MTVYDFCHIGH. Zn(2+) is bound by residues C210, H235, and E239. The 'KMSKS' region motif lies at 267-271; that stretch reads KMSKS. K270 serves as a coordination point for ATP.

This sequence belongs to the class-I aminoacyl-tRNA synthetase family. As to quaternary structure, monomer. Requires Zn(2+) as cofactor.

The protein resides in the cytoplasm. It catalyses the reaction tRNA(Cys) + L-cysteine + ATP = L-cysteinyl-tRNA(Cys) + AMP + diphosphate. The polypeptide is Cysteine--tRNA ligase (Ectopseudomonas mendocina (strain ymp) (Pseudomonas mendocina)).